A 730-amino-acid chain; its full sequence is Neuroligin-like protein glit-1 (730 aa).

Residues 1-18 (MFTGTIFNSLFTLPLVIS) form the signal peptide. Residues 19-663 (QFVPPPTRPV…EIMVFKWITG (645 aa)) are Extracellular-facing. N-linked (GlcNAc...) asparagine glycosylation is found at Asn-103, Asn-320, Asn-445, Asn-512, Asn-557, Asn-564, and Asn-604. Residues 664–684 (VNVIIIALLIVLAGAFGYMVW) traverse the membrane as a helical segment. Over 685 to 730 (GNKEDEEAAYKAENHQLVEYRDTGHSVSDATISSRTRSPRSRITNL) the chain is Cytoplasmic.

This sequence belongs to the type-B carboxylesterase/lipase family. As to expression, expressed in the pharynx, intestine, and in several cells in the head including dopaminergic neurons.

Its subcellular location is the cell membrane. Its function is as follows. Probable neuronal cell surface protein thought to be involved in cell-cell-interactions. Confers protection against oxidative stress. Plays a role in protecting dopaminergic neurons against oxidative stress-induced neurodegeneration. This Caenorhabditis elegans protein is Neuroligin-like protein glit-1.